The chain runs to 856 residues: DNA mismatch repair protein MutS (856 aa).

618-625 (GPNMGGKS) contacts ATP.

The protein belongs to the DNA mismatch repair MutS family.

Its function is as follows. This protein is involved in the repair of mismatches in DNA. It is possible that it carries out the mismatch recognition step. This protein has a weak ATPase activity. The chain is DNA mismatch repair protein MutS from Shewanella baltica (strain OS155 / ATCC BAA-1091).